Consider the following 410-residue polypeptide: Beta-arrestin-1 (410 aa).

An interaction with SRC region spans residues 1 to 163 (MGDKGTRVFK…LEEKIHKRNS (163 aa)). The tract at residues 45-86 (PEYLKERRVYVTLTCAFRYGREDLDVLGLTFRKDLFVANVQS) is interaction with CHRM2. Y47 bears the Phosphotyrosine mark. 1D-myo-inositol hexakisphosphate-binding residues include K250, M255, K324, and K326. An interaction with TRAF6 region spans residues 318 to 410 (IVSYKVKVKL…GTGSPQLNNR (93 aa)). The [DE]-X(1,2)-F-X-X-[FL]-X-X-X-R motif motif lies at 385–395 (RQRLKGMKDDK). Residues 389-410 (KGMKDDKEEEENGTGSPQLNNR) form a disordered region. Polar residues predominate over residues 401-410 (GTGSPQLNNR). S404 carries the phosphoserine; by GRK5 modification.

This sequence belongs to the arrestin family. Monomer. Homodimer. Homooligomer; the self-association is mediated by InsP6-binding. Heterooligomer with ARRB2; the association is mediated by InsP6-binding. Interacts with ADRB2 (phosphorylated). Interacts with CHRM2 (phosphorylated). Interacts with LHCGR. Interacts with CYTH2 and CASR. Interacts with AP2B1 (dephosphorylated); phosphorylation of AP2B1 disrupts the interaction. Interacts (dephosphorylated at Ser-404) with CLTC. Interacts with CCR2 and GRK2. Interacts with CRR5. Interacts with PTAFR (phosphorylated on serine residues). Interacts with CLTC and MAP2K3. Interacts with CREB1. Interacts with TRAF6. Interacts with IGF1R and MDM2. Interacts with C5AR1. Interacts with PDE4D. Interacts with SRC (via the SH3 domain and the protein kinase domain); the interaction is independent of the phosphorylation state of SRC C-terminus. Interacts with TACR1. Interacts with RAF1. Interacts with CHUK, IKBKB and MAP3K14. Interacts with DVL1; the interaction is enhanced by phosphorylation of DVL1. Interacts with DVL2; the interaction is enhanced by phosphorylation of DVL2. Interacts with IGF1R. Associates with MAP kinase p38. Part of a MAPK signaling complex consisting of TACR1, ARRB1, SRC, MAPK1 (activated) and MAPK3 (activated). Part of a MAPK signaling complex consisting of F2RL1, ARRB1, RAF1, MAPK1 (activated) and MAPK3 (activated). Interacts with GPR143. Interacts with MAP2K4/MKK4. Interacts with HCK and CXCR1 (phosphorylated). Interacts with ACKR3 and ACKR4. Interacts with ARRDC1; the interaction is direct. Interacts with GPR61, GPR62 and GPR135. In terms of processing, constitutively phosphorylated at in the cytoplasm. At the plasma membrane, is rapidly dephosphorylated, a process that is required for clathrin binding and ADRB2 endocytosis but not for ADRB2 binding and desensitization. Once internalized, is rephosphorylated. The ubiquitination status appears to regulate the formation and trafficking of beta-arrestin-GPCR complexes and signaling. Ubiquitination appears to occur GPCR-specific. Ubiquitinated by MDM2; the ubiquitination is required for rapid internalization of ADRB2. Deubiquitinated by USP33; the deubiquitination leads to a dissociation of the beta-arrestin-GPCR complex. Stimulation of a class A GPCR, such as ADRB2, induces transient ubiquitination and subsequently promotes association with USP33.

It localises to the cytoplasm. The protein localises to the nucleus. Its subcellular location is the cell membrane. It is found in the membrane. The protein resides in the clathrin-coated pit. It localises to the cell projection. The protein localises to the pseudopodium. Its subcellular location is the cytoplasmic vesicle. Functionally, functions in regulating agonist-mediated G-protein coupled receptor (GPCR) signaling by mediating both receptor desensitization and resensitization processes. During homologous desensitization, beta-arrestins bind to the GPRK-phosphorylated receptor and sterically preclude its coupling to the cognate G-protein; the binding appears to require additional receptor determinants exposed only in the active receptor conformation. The beta-arrestins target many receptors for internalization by acting as endocytic adapters (CLASPs, clathrin-associated sorting proteins) and recruiting the GPRCs to the adapter protein 2 complex 2 (AP-2) in clathrin-coated pits (CCPs). However, the extent of beta-arrestin involvement appears to vary significantly depending on the receptor, agonist and cell type. Internalized arrestin-receptor complexes traffic to intracellular endosomes, where they remain uncoupled from G-proteins. Two different modes of arrestin-mediated internalization occur. Class A receptors, like ADRB2, OPRM1, ENDRA, D1AR and ADRA1B dissociate from beta-arrestin at or near the plasma membrane and undergo rapid recycling. Class B receptors, like AVPR2, AGTR1, NTSR1, TRHR and TACR1 internalize as a complex with arrestin and traffic with it to endosomal vesicles, presumably as desensitized receptors, for extended periods of time. Receptor resensitization then requires that receptor-bound arrestin is removed so that the receptor can be dephosphorylated and returned to the plasma membrane. Involved in internalization of P2RY4 and UTP-stimulated internalization of P2RY2. Involved in phosphorylation-dependent internalization of OPRD1 ands subsequent recycling. Involved in the degradation of cAMP by recruiting cAMP phosphodiesterases to ligand-activated receptors. Beta-arrestins function as multivalent adapter proteins that can switch the GPCR from a G-protein signaling mode that transmits short-lived signals from the plasma membrane via small molecule second messengers and ion channels to a beta-arrestin signaling mode that transmits a distinct set of signals that are initiated as the receptor internalizes and transits the intracellular compartment. Acts as a signaling scaffold for MAPK pathways such as MAPK1/3 (ERK1/2). ERK1/2 activated by the beta-arrestin scaffold is largely excluded from the nucleus and confined to cytoplasmic locations such as endocytic vesicles, also called beta-arrestin signalosomes. Recruits c-Src/SRC to ADRB2 resulting in ERK activation. GPCRs for which the beta-arrestin-mediated signaling relies on both ARRB1 and ARRB2 (codependent regulation) include ADRB2, F2RL1 and PTH1R. For some GPCRs the beta-arrestin-mediated signaling relies on either ARRB1 or ARRB2 and is inhibited by the other respective beta-arrestin form (reciprocal regulation). Inhibits ERK1/2 signaling in AGTR1- and AVPR2-mediated activation (reciprocal regulation). Is required for SP-stimulated endocytosis of NK1R and recruits c-Src/SRC to internalized NK1R resulting in ERK1/2 activation, which is required for the antiapoptotic effects of SP. Is involved in proteinase-activated F2RL1-mediated ERK activity. Acts as a signaling scaffold for the AKT1 pathway. Is involved in alpha-thrombin-stimulated AKT1 signaling. Is involved in IGF1-stimulated AKT1 signaling leading to increased protection from apoptosis. Involved in activation of the p38 MAPK signaling pathway and in actin bundle formation. Involved in F2RL1-mediated cytoskeletal rearrangement and chemotaxis. Involved in AGTR1-mediated stress fiber formation by acting together with GNAQ to activate RHOA. Appears to function as signaling scaffold involved in regulation of MIP-1-beta-stimulated CCR5-dependent chemotaxis. Involved in attenuation of NF-kappa-B-dependent transcription in response to GPCR or cytokine stimulation by interacting with and stabilizing CHUK. May serve as nuclear messenger for GPCRs. Involved in OPRD1-stimulated transcriptional regulation by translocating to CDKN1B and FOS promoter regions and recruiting EP300 resulting in acetylation of histone H4. Involved in regulation of LEF1 transcriptional activity via interaction with DVL1 and/or DVL2 Also involved in regulation of receptors other than GPCRs. Involved in Toll-like receptor and IL-1 receptor signaling through the interaction with TRAF6 which prevents TRAF6 autoubiquitination and oligomerization required for activation of NF-kappa-B and JUN. Involved in IL8-mediated granule release in neutrophils. Binds phosphoinositides. Binds inositolhexakisphosphate (InsP6). Required for atypical chemokine receptor ACKR2-induced RAC1-LIMK1-PAK1-dependent phosphorylation of cofilin (CFL1) and for the up-regulation of ACKR2 from endosomal compartment to cell membrane, increasing its efficiency in chemokine uptake and degradation. Involved in the internalization of the atypical chemokine receptor ACKR3. Negatively regulates the NOTCH signaling pathway by mediating the ubiquitination and degradation of NOTCH1 by ITCH. Participates in the recruitment of the ubiquitin-protein ligase to the receptor. This Macaca fascicularis (Crab-eating macaque) protein is Beta-arrestin-1 (ARRB1).